Consider the following 623-residue polypeptide: MGIANKLRLSSSSLSRILHRRILYSSAVRSFTTSEGHRPTIVHKQGLDILHDPWFNKGTAFTMTERNRLDLRGLLPPNVMDSEQQIFRFMTDLKRLEEQARDGPSDPNALAKWRILNRLHDRNETMYYKVLINNIEEYAPIVYTPTVGLVCQNYSGLFRRPRGMYFSAEDRGEMMSMVYNWPAEQVDMIVVTDGSRILGLGDLGVHGIGIAVGKLDLYVAAAGINPQRVLPVMIDVGTNNEKLRNDPMYLGLQQRRLEDDDYIDVIDEFMEAVYTRWPHVIVQFEDFQSKWAFKLLQRYRCTYRMFNDDVQGTAGVAIAGLLGAVRAQGRPMIDFPKMKIVVAGAGSAGIGVLNAARKTMARMLGNTETAFDSAQSQFWVVDAQGLITEGRENIDPEAQPFARKTKEMERQGLKEGATLVEVVREVKPDVLLGLSAVGGLFSKEVLEAMKGSTSTRPAIFAMSNPTKNAECTPQDAFSILGENMIFASGSPFKNVEFGNGHVGHCNQGNNMYLFPGIGLGTLLSGAPIVSDGMLQAASECLAAYMSEEEVLEGIIYPPISRIRDITKRIAAAVIKEAIEEDLVEGYREMDAREIQKLDEEGLMEYVENNMWNPEYPTLVYKDD.

The transit peptide at 1–38 directs the protein to the mitochondrion; the sequence is MGIANKLRLSSSSLSRILHRRILYSSAVRSFTTSEGHR. Tyr-143 serves as the catalytic Proton donor. Arg-196 contacts NAD(+). Lys-214 serves as the catalytic Proton acceptor. Glu-285, Asp-286, and Asp-309 together coordinate a divalent metal cation. 2 residues coordinate NAD(+): Asp-309 and Asn-464.

This sequence belongs to the malic enzymes family. In terms of assembly, homodimer. Heterodimer of two related subunits in NAD-MEH complex. Interacts with NAD-ME2. It depends on Mg(2+) as a cofactor. The cofactor is Mn(2+). In terms of tissue distribution, expressed in leaves, stems, flowers, and roots (at protein level).

The protein resides in the mitochondrion. The enzyme catalyses (S)-malate + NAD(+) = pyruvate + CO2 + NADH. Its activity is regulated as follows. Activated by oxaloacetate (OAA), 2-ketoglutarate, succinate and fumarate as homodimer and by OAA, 2-ketoglutarate, succinate, fumarate and coenzyme A (acetyl-CoA and CoA) as heterodimer NAD-MEH. Involved in the regulation of sugars and amino acids metabolisms during the night period. The protein is NAD-dependent malic enzyme 1, mitochondrial (NAD-ME1) of Arabidopsis thaliana (Mouse-ear cress).